Consider the following 204-residue polypeptide: Factor arrest protein 3 (204 aa).

In terms of assembly, component of a complex at least composed of FAR3, FAR7, FAR8, FAR10, FAR11 and VPS64.

The protein resides in the endoplasmic reticulum. Its function is as follows. Participates in the control of the reentry into the cell cycle following pheromone treatment. This Saccharomyces cerevisiae (strain ATCC 204508 / S288c) (Baker's yeast) protein is Factor arrest protein 3 (FAR3).